The primary structure comprises 431 residues: Hydroxylamine reductase (431 aa).

Positions 5, 8, 17, and 23 each coordinate [4Fe-4S] cluster. Positions 131, 155, 199, 286, 314, 339, 373, and 375 each coordinate hybrid [4Fe-2O-2S] cluster. C286 is modified (cysteine persulfide).

The protein belongs to the HCP family. It depends on [4Fe-4S] cluster as a cofactor. Hybrid [4Fe-2O-2S] cluster is required as a cofactor.

It localises to the cytoplasm. It carries out the reaction A + NH4(+) + H2O = hydroxylamine + AH2 + H(+). Its function is as follows. Catalyzes the reduction of hydroxylamine to form NH(3) and H(2)O. The sequence is that of Hydroxylamine reductase from Thermotoga petrophila (strain ATCC BAA-488 / DSM 13995 / JCM 10881 / RKU-1).